The sequence spans 297 residues: Ribosomal RNA small subunit methyltransferase H (297 aa).

Residues 30–32 (GGY), D48, F75, D96, and Q103 each bind S-adenosyl-L-methionine.

The protein belongs to the methyltransferase superfamily. RsmH family.

It is found in the cytoplasm. It carries out the reaction cytidine(1402) in 16S rRNA + S-adenosyl-L-methionine = N(4)-methylcytidine(1402) in 16S rRNA + S-adenosyl-L-homocysteine + H(+). Functionally, specifically methylates the N4 position of cytidine in position 1402 (C1402) of 16S rRNA. The chain is Ribosomal RNA small subunit methyltransferase H from Ehrlichia chaffeensis (strain ATCC CRL-10679 / Arkansas).